Here is a 311-residue protein sequence, read N- to C-terminus: Porphobilinogen deaminase (311 aa).

Cys-241 is modified (S-(dipyrrolylmethanemethyl)cysteine).

It belongs to the HMBS family. In terms of assembly, monomer. The cofactor is dipyrromethane.

The enzyme catalyses 4 porphobilinogen + H2O = hydroxymethylbilane + 4 NH4(+). Its pathway is porphyrin-containing compound metabolism; protoporphyrin-IX biosynthesis; coproporphyrinogen-III from 5-aminolevulinate: step 2/4. In terms of biological role, tetrapolymerization of the monopyrrole PBG into the hydroxymethylbilane pre-uroporphyrinogen in several discrete steps. This is Porphobilinogen deaminase from Shouchella clausii (strain KSM-K16) (Alkalihalobacillus clausii).